The primary structure comprises 113 residues: Iron-sulfur cluster insertion protein ErpA (113 aa).

Iron-sulfur cluster-binding residues include Cys41, Cys105, and Cys107.

It belongs to the HesB/IscA family. Homodimer. Iron-sulfur cluster is required as a cofactor.

Functionally, required for insertion of 4Fe-4S clusters for at least IspG. The chain is Iron-sulfur cluster insertion protein ErpA from Actinobacillus pleuropneumoniae serotype 7 (strain AP76).